Consider the following 77-residue polypeptide: U11-lycotoxin-Ls1a (77 aa).

A signal peptide spans 1–20; it reads MKLIILTGLVLFAIVSLIEA. The propeptide occupies 21 to 26; that stretch reads EEESGR.

The protein belongs to the neurotoxin 19 (CSTX) family. 10 (U11-Lctx) subfamily. Contains 4 disulfide bonds. As to expression, expressed by the venom gland.

The protein localises to the secreted. The polypeptide is U11-lycotoxin-Ls1a (Lycosa singoriensis (Wolf spider)).